A 607-amino-acid polypeptide reads, in one-letter code: MDTKIGSIDDCKPTNGDVCSPTNGTVATIHNSVPSSAITINYCDATLGRHLARRLVQAGVTDVFSVPGDFNLTLLDHLMAEPDLNLIGCCNELNAGYAADGYARSRGVGACVVTFTVGGLSVLNAIAGAYSENLPLICIVGGPNSNDYGTNRILHHTIGLPDFSQELRCFQTVTCYQAVVNNLDDAHEQIDKAISTALKESKPVYISVSCNLAAIPHHTFSRDPVPFSLAPRLSNKMGLEAAVEATLEFLNKAVKPVMVGGPKLRVAKACDAFVELADASGYALAMMPSAKGFVPEHHPHFIGTYWGAVSTPFCSEIVESADAYIFAGPIFNDYSSVGYSLLLKKEKAIVVQPDRITVANGPTFGCILMSDFFRELSKRVKRNETAYENYHRIFVPEGKPLKCESREPLRVNTMFQHIQKMLSSETAVIAETGDSWFNCQKLKLPKGCGYEFQMQYGSIGWSVGATLGYAQASPEKRVLAFIGDGSFQVTVQDISTMLRNGQKTIIFLINNGGYTIEVEIHDGPYNVIKNWNYTGLVDAIHNGEGNCWTAKVRYEEELVEAITTATTEKKDCLCFIEVILHKDDTSKELLEWGSRVSAANSRPPNPQ.

Substrate-binding residues include Asp69 and His156. The segment at 434–516 (DSWFNCQKLK…FLINNGGYTI (83 aa)) is thiamine pyrophosphate binding. Asp484, Asn511, and Gly513 together coordinate Mg(2+). Residue Glu517 coordinates substrate.

Belongs to the TPP enzyme family. In terms of assembly, homotetramer. Requires a metal cation as cofactor. It depends on thiamine diphosphate as a cofactor. As to expression, highly expressed in seeds, and at lower levels in roots and siliques.

The enzyme catalyses a 2-oxocarboxylate + H(+) = an aldehyde + CO2. Functionally, may play a role in ethanolic fermentation during anoxia. The sequence is that of Pyruvate decarboxylase 1 (PDC1) from Arabidopsis thaliana (Mouse-ear cress).